Here is a 312-residue protein sequence, read N- to C-terminus: Polyamine aminopropyltransferase (312 aa).

Residues 7–247 (FFWAQEYFTP…GPLGFALAAQ (241 aa)) form the PABS domain. Glutamine 36 is an S-methyl-5'-thioadenosine binding site. Residues histidine 67 and glutamate 95 each contribute to the spermidine site. S-methyl-5'-thioadenosine contacts are provided by residues aspartate 115 and 147–148 (DA). The active-site Proton acceptor is aspartate 165. Proline 174 contacts S-methyl-5'-thioadenosine.

This sequence belongs to the spermidine/spermine synthase family. As to quaternary structure, homodimer or homotetramer.

It localises to the cytoplasm. The enzyme catalyses S-adenosyl 3-(methylsulfanyl)propylamine + putrescine = S-methyl-5'-thioadenosine + spermidine + H(+). The protein operates within amine and polyamine biosynthesis; spermidine biosynthesis; spermidine from putrescine: step 1/1. Catalyzes the irreversible transfer of a propylamine group from the amino donor S-adenosylmethioninamine (decarboxy-AdoMet) to putrescine (1,4-diaminobutane) to yield spermidine. This Synechococcus sp. (strain JA-3-3Ab) (Cyanobacteria bacterium Yellowstone A-Prime) protein is Polyamine aminopropyltransferase.